The chain runs to 153 residues: 3-hydroxyacyl-[acyl-carrier-protein] dehydratase FabZ (153 aa).

H54 is a catalytic residue.

This sequence belongs to the thioester dehydratase family. FabZ subfamily.

The protein localises to the cytoplasm. The catalysed reaction is a (3R)-hydroxyacyl-[ACP] = a (2E)-enoyl-[ACP] + H2O. Its function is as follows. Involved in unsaturated fatty acids biosynthesis. Catalyzes the dehydration of short chain beta-hydroxyacyl-ACPs and long chain saturated and unsaturated beta-hydroxyacyl-ACPs. The chain is 3-hydroxyacyl-[acyl-carrier-protein] dehydratase FabZ from Shewanella loihica (strain ATCC BAA-1088 / PV-4).